Consider the following 114-residue polypeptide: MNNIIREITNEQLRTDLPSFRPGDTLRVHVKVIEGSRERIQVFEGVVIKRRGTGVSETFTVRKISYGVGVERTFPLHSPKIDKIEVKRRGKVRRAKLYYLRNLRGKAARIKEIR.

The protein belongs to the bacterial ribosomal protein bL19 family.

In terms of biological role, this protein is located at the 30S-50S ribosomal subunit interface and may play a role in the structure and function of the aminoacyl-tRNA binding site. In Halalkalibacterium halodurans (strain ATCC BAA-125 / DSM 18197 / FERM 7344 / JCM 9153 / C-125) (Bacillus halodurans), this protein is Large ribosomal subunit protein bL19.